The chain runs to 127 residues: Fluoride-specific ion channel FluC (127 aa).

The next 4 membrane-spanning stretches (helical) occupy residues S4–M24, P35–F55, L68–V88, and I96–A116. Na(+) contacts are provided by G75 and T78.

The protein belongs to the fluoride channel Fluc/FEX (TC 1.A.43) family.

It localises to the cell inner membrane. The enzyme catalyses fluoride(in) = fluoride(out). With respect to regulation, na(+) is not transported, but it plays an essential structural role and its presence is essential for fluoride channel function. Functionally, fluoride-specific ion channel. Important for reducing fluoride concentration in the cell, thus reducing its toxicity. In Pseudomonas putida (strain W619), this protein is Fluoride-specific ion channel FluC.